We begin with the raw amino-acid sequence, 567 residues long: Glucose-6-phosphate isomerase, cytosolic (567 aa).

Glutamate 360 acts as the Proton donor in catalysis. Catalysis depends on residues histidine 391 and lysine 516.

The protein belongs to the GPI family. In terms of assembly, homodimer.

It localises to the cytoplasm. It catalyses the reaction alpha-D-glucose 6-phosphate = beta-D-fructose 6-phosphate. It participates in carbohydrate degradation; glycolysis; D-glyceraldehyde 3-phosphate and glycerone phosphate from D-glucose: step 2/4. The sequence is that of Glucose-6-phosphate isomerase, cytosolic (PHI1) from Zea mays (Maize).